A 557-amino-acid polypeptide reads, in one-letter code: Membrane protein insertase YidC (557 aa).

5 helical membrane passes run 3–23 (IKRT…FDNW), 363–383 (FVGN…AVFF), 437–457 (LPVV…LASV), 476–496 (PYFI…KLNP), and 507–527 (MMFM…GLVL).

It belongs to the OXA1/ALB3/YidC family. Type 1 subfamily. Interacts with the Sec translocase complex via SecD. Specifically interacts with transmembrane segments of nascent integral membrane proteins during membrane integration.

The protein resides in the cell inner membrane. Required for the insertion and/or proper folding and/or complex formation of integral membrane proteins into the membrane. Involved in integration of membrane proteins that insert both dependently and independently of the Sec translocase complex, as well as at least some lipoproteins. Aids folding of multispanning membrane proteins. This is Membrane protein insertase YidC from Burkholderia thailandensis (strain ATCC 700388 / DSM 13276 / CCUG 48851 / CIP 106301 / E264).